The chain runs to 107 residues: Acetyl-CoA acetyltransferase (107 aa).

The active-site Acyl-thioester intermediate is Cys88.

This sequence belongs to the thiolase-like superfamily. Thiolase family. Homotetramer.

It localises to the cytoplasm. The enzyme catalyses 2 acetyl-CoA = acetoacetyl-CoA + CoA. Functionally, catalyzes the condensation of two molecules of acetyl-CoA to produce acetoacetyl-CoA. This Clostridioides difficile (Peptoclostridium difficile) protein is Acetyl-CoA acetyltransferase (thi).